The chain runs to 371 residues: Cytochrome b (371 aa).

4 helical membrane-spanning segments follow: residues 25-45 (FGSM…FLAV), 69-90 (WMMQ…YIHI), 105-125 (WMSG…GYVL), and 170-190 (FFAL…LHVI). Heme b contacts are provided by His75 and His89. Residues His174 and His188 each coordinate heme b. Residue His193 coordinates a ubiquinone. 4 helical membrane passes run 218–238 (YKDL…VSFF), 280–300 (LGGA…PFTH), 312–332 (LSQL…WAAT), and 339–358 (FIII…ISTP).

It belongs to the cytochrome b family. The cytochrome bc1 complex contains 3 respiratory subunits (MT-CYB, CYC1 and UQCRFS1), 2 core proteins (UQCRC1 and UQCRC2) and probably 6 low-molecular weight proteins. Heme b serves as cofactor.

Its subcellular location is the mitochondrion inner membrane. Functionally, component of the ubiquinol-cytochrome c reductase complex (complex III or cytochrome b-c1 complex) that is part of the mitochondrial respiratory chain. The b-c1 complex mediates electron transfer from ubiquinol to cytochrome c. Contributes to the generation of a proton gradient across the mitochondrial membrane that is then used for ATP synthesis. In Python sebae (African rock python), this protein is Cytochrome b (MT-CYB).